The following is a 211-amino-acid chain: ATP phosphoribosyltransferase (211 aa).

It belongs to the ATP phosphoribosyltransferase family. Short subfamily. In terms of assembly, heteromultimer composed of HisG and HisZ subunits.

Its subcellular location is the cytoplasm. The catalysed reaction is 1-(5-phospho-beta-D-ribosyl)-ATP + diphosphate = 5-phospho-alpha-D-ribose 1-diphosphate + ATP. It participates in amino-acid biosynthesis; L-histidine biosynthesis; L-histidine from 5-phospho-alpha-D-ribose 1-diphosphate: step 1/9. Its function is as follows. Catalyzes the condensation of ATP and 5-phosphoribose 1-diphosphate to form N'-(5'-phosphoribosyl)-ATP (PR-ATP). Has a crucial role in the pathway because the rate of histidine biosynthesis seems to be controlled primarily by regulation of HisG enzymatic activity. This is ATP phosphoribosyltransferase from Pseudomonas putida (strain ATCC 700007 / DSM 6899 / JCM 31910 / BCRC 17059 / LMG 24140 / F1).